A 297-amino-acid polypeptide reads, in one-letter code: Acetaldehyde dehydrogenase (297 aa).

18–21 (TGNI) is a binding site for NAD(+). C133 functions as the Acyl-thioester intermediate in the catalytic mechanism. NAD(+)-binding positions include 165–173 (SAGPATRLN) and N275.

The protein belongs to the acetaldehyde dehydrogenase family.

The catalysed reaction is acetaldehyde + NAD(+) + CoA = acetyl-CoA + NADH + H(+). The sequence is that of Acetaldehyde dehydrogenase from Spirochaeta aurantia.